Consider the following 140-residue polypeptide: Small ribosomal subunit protein uS12 (140 aa).

2 disordered regions span residues 36–56 (TYNP…MTPK) and 117–140 (TSGV…EKKE).

The protein belongs to the universal ribosomal protein uS12 family. Part of the 30S ribosomal subunit. Contacts proteins S8 and S17. May interact with IF1 in the 30S initiation complex.

With S4 and S5 plays an important role in translational accuracy. Its function is as follows. Interacts with and stabilizes bases of the 16S rRNA that are involved in tRNA selection in the A site and with the mRNA backbone. Located at the interface of the 30S and 50S subunits, it traverses the body of the 30S subunit contacting proteins on the other side and probably holding the rRNA structure together. The combined cluster of proteins S8, S12 and S17 appears to hold together the shoulder and platform of the 30S subunit. This chain is Small ribosomal subunit protein uS12, found in Malacoplasma penetrans (strain HF-2) (Mycoplasma penetrans).